The following is a 978-amino-acid chain: Calsyntenin-1 (978 aa).

Residues methionine 1 to threonine 26 form the signal peptide. At serine 27–histidine 876 the chain is on the extracellular side. 2 consecutive Cadherin domains span residues glutamine 37–phenylalanine 143 and leucine 144–arginine 249. An N-linked (GlcNAc...) asparagine glycan is attached at asparagine 53. 4 N-linked (GlcNAc...) asparagine glycosylation sites follow: asparagine 304, asparagine 486, asparagine 608, and asparagine 823. Residues valine 877–isoleucine 897 traverse the membrane as a helical segment. The Cytoplasmic segment spans residues alanine 898–glutamine 978. The interval alanine 937–leucine 958 is disordered. Residues glutamate 948 to alanine 957 are compositionally biased toward acidic residues.

Belongs to the calsyntenin family.

The protein resides in the postsynaptic cell membrane. Its function is as follows. Postsynaptic adhesion molecule that binds to presynaptic neurexins to mediate both excitatory and inhibitory synapse formation. Promotes synapse development by acting as a cell adhesion molecule at the postsynaptic membrane, which associates with neurexin-alpha at the presynaptic membrane. This is Calsyntenin-1 (Cals) from Drosophila melanogaster (Fruit fly).